The chain runs to 430 residues: Pre-B-cell leukemia transcription factor 2 (430 aa).

A disordered region spans residues 1–52; it reads MDERLLGPPPPGGGRGGLGLVGAEPGGPGEPPGGGDPGGGSGGVPGGRGKQD. The segment covering 13-48 has biased composition (gly residues); that stretch reads GGRGGLGLVGAEPGGPGEPPGGGDPGGGSGGVPGGR. Positions 48–243 constitute a PBC domain; it reads RGKQDIGDIL…VMILRSRFLD (196 aa). Residues 55–134 are PBC-A; sequence DILQQIMTIT…EGVAGPEKGG (80 aa). Phosphoserine is present on residues S136, S151, and S159. The interval 137–243 is PBC-B; that stretch reads AAAAAAAAAS…VMILRSRFLD (107 aa). The homeobox; TALE-type DNA-binding region spans 244-306; the sequence is ARRKRRNFSK…NKRIRYKKNI (63 aa). Disordered regions lie at residues 327 to 347 and 375 to 430; these read GGHSRTSSPTPPSSAGSGGSF and LRHS…DTSN. 2 positions are modified to phosphoserine: S330 and S395. A compositionally biased stretch (polar residues) spans 409–418; the sequence is VTPSSVTSPT.

The protein belongs to the TALE/PBX homeobox family. In terms of assembly, forms heterodimers with MEIS1 and heterotrimers with MEIS1 and HOXA9. Interacts with PBXIP1.

The protein localises to the nucleus. Functionally, transcriptional activator that binds the sequence 5'-ATCAATCAA-3'. Activates transcription of PF4 in complex with MEIS1. This Mus musculus (Mouse) protein is Pre-B-cell leukemia transcription factor 2 (Pbx2).